Consider the following 160-residue polypeptide: Large ribosomal subunit protein eL21 (160 aa).

2 stretches are compositionally biased toward basic and acidic residues: residues 112-123 and 136-145; these read NDQKKKEAKEKG and REAHFVRTNG. Residues 112–145 form a disordered region; that stretch reads NDQKKKEAKEKGTWVQLKRQPAPPREAHFVRTNG.

The protein belongs to the eukaryotic ribosomal protein eL21 family. Component of the large ribosomal subunit.

The protein localises to the cytoplasm. Its subcellular location is the cytosol. It is found in the endoplasmic reticulum. Its function is as follows. Component of the large ribosomal subunit. The ribosome is a large ribonucleoprotein complex responsible for the synthesis of proteins in the cell. This Capra hircus (Goat) protein is Large ribosomal subunit protein eL21 (RPL21).